Here is a 168-residue protein sequence, read N- to C-terminus: UPF0304 protein MJECS11 (168 aa).

This sequence belongs to the UPF0304 family.

The chain is UPF0304 protein MJECS11 from Methanocaldococcus jannaschii (strain ATCC 43067 / DSM 2661 / JAL-1 / JCM 10045 / NBRC 100440) (Methanococcus jannaschii).